Consider the following 79-residue polypeptide: MADAITVLTAIGITVLMLLMVISGTAMIVKELNPNDIFTMQSLKFNRAVTIFKYIGLFIYIPGTIILYATYIKSLLMKS.

Over 1-3 (MAD) the chain is Intravirion. The helical transmembrane segment at 4-24 (AITVLTAIGITVLMLLMVISG) threads the bilayer. Over 25 to 47 (TAMIVKELNPNDIFTMQSLKFNR) the chain is Virion surface. The helical transmembrane segment at 48 to 68 (AVTIFKYIGLFIYIPGTIILY) threads the bilayer. Topologically, residues 69–79 (ATYIKSLLMKS) are intravirion.

This sequence belongs to the orthopoxvirus OPG081 family.

It is found in the virion membrane. Envelope protein. This Variola virus protein is Protein OPG081 (OPG081).